The chain runs to 73 residues: Large ribosomal subunit protein bL31 (73 aa).

Positions 16, 18, 37, and 40 each coordinate Zn(2+).

The protein belongs to the bacterial ribosomal protein bL31 family. Type A subfamily. As to quaternary structure, part of the 50S ribosomal subunit. The cofactor is Zn(2+).

Functionally, binds the 23S rRNA. This chain is Large ribosomal subunit protein bL31, found in Marinobacter nauticus (strain ATCC 700491 / DSM 11845 / VT8) (Marinobacter aquaeolei).